Here is a 274-residue protein sequence, read N- to C-terminus: Probable eukaryotic translation initiation factor 3 subunit J (274 aa).

Disordered stretches follow at residues 1–110 (MDSW…KEAM) and 207–245 (KEQQEKTQSKRGAAAPAAKPVSTAAPSKKGGKPTVNVNS). Residues 38–47 (DEEDEDEEEN) show a composition bias toward acidic residues. Over residues 52-73 (QNDSHSVSQKSSSSSQNDQGSN) the composition is skewed to low complexity. Basic and acidic residues predominate over residues 82–110 (IQERNFEKAIKASEAAAKEESLESSKEAM). A compositionally biased stretch (low complexity) spans 219–234 (AAAPAAKPVSTAAPSK).

It belongs to the eIF-3 subunit J family. As to quaternary structure, component of the eukaryotic translation initiation factor 3 (eIF-3) complex. The eIF-3 complex appears to include tif32/eif3a, SPAC25G10.08/eif3b, tif33/eif3c, SPBC4C3.07/eif3f, tif35/eif3g and sum1/eif3i. This set of common subunits may also associate exclusively with either moe1/eif3d and int6/eif3e, or with SPAC821.05/eif3h and SPAC1751.03/eif3m. The eIF-3 complex may also include SPAC3A12.13c/eif3j. Interacts with sad1.

Its subcellular location is the cytoplasm. Functionally, component of the eukaryotic translation initiation factor 3 (eIF-3) complex, which is involved in protein synthesis of a specialized repertoire of mRNAs and, together with other initiation factors, stimulates binding of mRNA and methionyl-tRNAi to the 40S ribosome. The eIF-3 complex specifically targets and initiates translation of a subset of mRNAs involved in cell proliferation. The chain is Probable eukaryotic translation initiation factor 3 subunit J from Schizosaccharomyces pombe (strain 972 / ATCC 24843) (Fission yeast).